The sequence spans 1226 residues: Chromosome partition protein Smc (1226 aa).

32–39 (PNGCGKSN) lines the ATP pocket. Coiled coils occupy residues 173-231 (ITKF…IKRN) and 269-491 (NSLE…SKSL). Residues 527-635 (YQLLGNLIQC…FDGYFIASKF (109 aa)) form the SMC hinge domain. Coiled-coil stretches lie at residues 679-741 (QGVV…AAKK), 775-965 (MLES…LREA), and 1006-1078 (HRRY…KSKE).

It belongs to the SMC family. As to quaternary structure, homodimer.

It localises to the cytoplasm. Required for chromosome condensation and partitioning. The sequence is that of Chromosome partition protein Smc from Halobacteriovorax marinus (strain ATCC BAA-682 / DSM 15412 / SJ) (Bacteriovorax marinus).